Here is a 333-residue protein sequence, read N- to C-terminus: Ribosomal RNA small subunit methyltransferase C (333 aa).

Belongs to the methyltransferase superfamily. RsmC family. As to quaternary structure, monomer.

The protein localises to the cytoplasm. It carries out the reaction guanosine(1207) in 16S rRNA + S-adenosyl-L-methionine = N(2)-methylguanosine(1207) in 16S rRNA + S-adenosyl-L-homocysteine + H(+). Its function is as follows. Specifically methylates the guanine in position 1207 of 16S rRNA in the 30S particle. This chain is Ribosomal RNA small subunit methyltransferase C, found in Mannheimia succiniciproducens (strain KCTC 0769BP / MBEL55E).